The following is a 121-amino-acid chain: Small ribosomal subunit protein uS13 (121 aa).

Positions 94-121 (GLPVRGQSSKTNARTVKGPRKTVANKKK) are disordered. Positions 110–121 (KGPRKTVANKKK) are enriched in basic residues.

It belongs to the universal ribosomal protein uS13 family. As to quaternary structure, part of the 30S ribosomal subunit. Forms a loose heterodimer with protein S19. Forms two bridges to the 50S subunit in the 70S ribosome.

Its function is as follows. Located at the top of the head of the 30S subunit, it contacts several helices of the 16S rRNA. In the 70S ribosome it contacts the 23S rRNA (bridge B1a) and protein L5 of the 50S subunit (bridge B1b), connecting the 2 subunits; these bridges are implicated in subunit movement. Contacts the tRNAs in the A and P-sites. The sequence is that of Small ribosomal subunit protein uS13 from Mesoplasma florum (strain ATCC 33453 / NBRC 100688 / NCTC 11704 / L1) (Acholeplasma florum).